A 314-amino-acid chain; its full sequence is MRPLAIIGPTGSGKSQLALDVAERLAGEVPAEIVNADAMQLYRGMDIGTAKLSVAARRGIPHHQLDVLNVAETATVARYQQAAAADIEAIIARGHVPIVVGGSMLHVQSLLDNWSFPATDPAVRARWEECLAELGVGELHAELARRDPAAAATILPTDGRRIVRALEVIELTGQPFAASAPRIGAAQWGTAIIGLDCDTPILDDRLAVRTDSMFERGLVEEVRVLLRAGLRDGVTAARALGYAQVLAALDAGGGAELLDDAREQTYFGTRRYVRRQRSWFRRDHRVHWCDAGATGPSDRVAMVDEALRVWRHVT.

8 to 15 (GPTGSGKS) serves as a coordination point for ATP. A substrate-binding site is contributed by 10-15 (TGSGKS).

It belongs to the IPP transferase family. As to quaternary structure, monomer. The cofactor is Mg(2+).

It carries out the reaction adenosine(37) in tRNA + dimethylallyl diphosphate = N(6)-dimethylallyladenosine(37) in tRNA + diphosphate. Catalyzes the transfer of a dimethylallyl group onto the adenine at position 37 in tRNAs that read codons beginning with uridine, leading to the formation of N6-(dimethylallyl)adenosine (i(6)A). The sequence is that of tRNA dimethylallyltransferase 1 from Mycobacterium ulcerans (strain Agy99).